Consider the following 201-residue polypeptide: Nucleoid occlusion factor SlmA (201 aa).

Residues 14-75 (KERQQQVLEV…ALIERIEMTL (62 aa)) enclose the HTH tetR-type domain. A DNA-binding region (H-T-H motif) is located at residues 38–57 (TTERLSKAVGVSEGALYRYF).

Belongs to the nucleoid occlusion factor SlmA family. As to quaternary structure, homodimer. Interacts with FtsZ.

The protein localises to the cytoplasm. The protein resides in the nucleoid. In terms of biological role, required for nucleoid occlusion (NO) phenomenon, which prevents Z-ring formation and cell division over the nucleoid. Acts as a DNA-associated cell division inhibitor that binds simultaneously chromosomal DNA and FtsZ, and disrupts the assembly of FtsZ polymers. SlmA-DNA-binding sequences (SBS) are dispersed on non-Ter regions of the chromosome, preventing FtsZ polymerization at these regions. This chain is Nucleoid occlusion factor SlmA, found in Glaesserella parasuis serovar 5 (strain SH0165) (Haemophilus parasuis).